The chain runs to 317 residues: NF-kappa-B inhibitor alpha (317 aa).

Positions 1-39 are disordered; sequence MFQAAERPQEWAMEGPRDGLKKERLLDDRHDSGLDSMKD. Positions 15-39 are enriched in basic and acidic residues; sequence GPRDGLKKERLLDDRHDSGLDSMKD. Lys-21 is covalently cross-linked (Glycyl lysine isopeptide (Lys-Gly) (interchain with G-Cter in SUMO); alternate). Lys-21 is covalently cross-linked (Glycyl lysine isopeptide (Lys-Gly) (interchain with G-Cter in ubiquitin); alternate). A Glycyl lysine isopeptide (Lys-Gly) (interchain with G-Cter in ubiquitin) cross-link involves residue Lys-22. The Destruction motif signature appears at 30–36; sequence HDSGLDS. At Ser-32 the chain carries Phosphoserine; by IKKA and IKKE. Position 36 is a phosphoserine; by IKKA, IKKB, IKKE and TBK1 (Ser-36). Tyr-42 carries the phosphotyrosine; by Tyr-kinases modification. Residues 45–54 carry the Nuclear export signal motif; sequence MVKELQEIRL. ANK repeat units follow at residues 73–103, 110–139, 143–172, 182–211, and 216–245; these read DGDSFLHLAIIHEEKALTMEVIRQVKGDLAF, LQQTPLHLAVITNQPEIAEALLGAGCDPEL, RGNTPLHLACEQGCLASVGVLTQSCTTPHL, NGHTCLHLASIHGYLGIVELLVSLGADVNA, and NGRTALHLAVDLQNPDLVSLLLKCGADVNR. A Nuclear import signal motif is present at residues 110–120; sequence LQQTPLHLAVI. A (3S)-3-hydroxyasparagine; by HIF1AN; partial mark is found at Asn-210 and Asn-244. Ser-283 and Ser-288 each carry phosphoserine; by CK2. Thr-291 carries the post-translational modification Phosphothreonine; by CK2. Phosphoserine; by CK2 is present on Ser-293. Phosphothreonine; by CK2 is present on Thr-299.

It belongs to the NF-kappa-B inhibitor family. In terms of assembly, interacts with RELA; the interaction requires the nuclear import signal. Part of a 70-90 kDa complex at least consisting of CHUK, IKBKB, NFKBIA, RELA, ELP1 and MAP3K14. Interacts with NKIRAS1 and NKIRAS2. Interacts with isoform 1 and isoform 2 of RWDD3; the interaction enhances sumoylation. Interacts with PRMT2. Interacts with PRKACA in platelets; this interaction is disrupted by thrombin and collagen. Interacts with MEFV. Interacts with DDRGK1; positively regulates NFKBIA phosphorylation and degradation. Interacts with HNRNPA2B1; the interaction may be mediated by the RRM2 domain of HNRNPA2B1, and HNRNPA2B1 may interact simultaneously with FAM76B and either NFKBIA or NFKBIE to form a complex. As to quaternary structure, (Microbial infection) Interacts with HBV protein X. Post-translationally, phosphorylated at Ser-32 and Ser-36 by IKKA/CHUK and IKKB/IKBKB; disables inhibition of NF-kappa-B DNA-binding activity. Phosphorylation at positions 32 and 36 is prerequisite to recognition by the SCF(FBXW11) and SCF(BTRC) complexes, leading to polyubiquitination and subsequent degradation. Phosphorylated at Ser-32 in response to FK506 treatment: phosphorylation is independent of IKKA/CHUK and IKKB/IKBKB and promotes NFKBIA degradation, followed by NF-kappa-B activation. Phosphorylated at Tyr-42: its effect is however unclear. According to a report, phosphorylation at Tyr-42 activates NF-kappa-B without triggering proteolytic degradation of NFKBIA. According to another publication, phosphorylation at Tyr-42 inhibits NF-kappa-B activity by preventing phosphorylation at Ser-32 and Ser-36 and subsequent ubiquitination and degradation. In terms of processing, polyubiquitinated at Lys-21 and/or Lys-22 following phosphorylation at Ser-32 and Ser-36. Monoubiquitinated at Lys-21 and/or Lys-22 by UBE2D3. Ubiquitin chain elongation is then performed by CDC34 in cooperation with the SCF(FBXW11) E3 ligase complex, building ubiquitin chains from the UBE2D3-primed NFKBIA-linked ubiquitin. The resulting polyubiquitination leads to protein degradation. Also ubiquitinated by the SCF(BTRC) complex following stimulus-dependent phosphorylation at Ser-32 and Ser-36. Deubiquitinated by USP38, leading to NF-kappa-B inhibition. Sumoylated; sumoylation requires the presence of the nuclear import signal. Sumoylation blocks ubiquitination and proteasome-mediated degradation of the protein thereby increasing the protein stability. Post-translationally, hydroxylated by HIF1AN. In terms of processing, (Microbial infection) Deubiquitinated by porcine reproductive and respiratory syndrome virus Nsp2 protein, which thereby interferes with NFKBIA degradation and impairs subsequent NF-kappa-B activation.

It is found in the cytoplasm. The protein resides in the nucleus. Functionally, inhibits the activity of dimeric NF-kappa-B/REL complexes by trapping REL (RELA/p65 and NFKB1/p50) dimers in the cytoplasm by masking their nuclear localization signals. On cellular stimulation by immune and pro-inflammatory responses, becomes phosphorylated promoting ubiquitination and degradation, enabling the dimeric RELA to translocate to the nucleus and activate transcription. This Homo sapiens (Human) protein is NF-kappa-B inhibitor alpha (NFKBIA).